The chain runs to 856 residues: Centrosomal protein of 97 kDa (856 aa).

LRR repeat units lie at residues 37–58, 59–80, 81–102, 103–124, 125–146, 147–168, 171–192, and 196–205; these read DVHT…EKCK, QLIQ…AKLT, QLRV…KDLV, HLEW…NSCT, ALQH…SKLI, SLKT…PAYL, NLSI…SFLA, and ELEQLSIMNN. Positions 211-249 constitute an LRRCT domain; sequence TPSIPGFDYRPFIVSWCLNLRVLDGYVISQKESLKAEWL. A CCP110-binding region spans residues 300–742; sequence HQRQLMSQSQ…KCVKDRDSEA (443 aa). Ser308 and Ser410 each carry phosphoserine. The tract at residues 430 to 451 is disordered; that stretch reads DDGADEFTKGLENQDEDKDKEK. Residue Ser497 is modified to Phosphoserine. The segment covering 498-513 has biased composition (polar residues); sequence LTSLPESAGHSASRTE. The tract at residues 498 to 525 is disordered; that stretch reads LTSLPESAGHSASRTEANSEEAMSPATS. Ser521 carries the post-translational modification Phosphoserine. Thr534 bears the Phosphothreonine mark. The IQ domain occupies 550–579; it reads LNAAATKLQACWRGFYTRNYNQQAKGVRYE. The tract at residues 579 to 853 is interaction with MPHOSPH9; it reads EIRLRRMQEH…FQGLHVGVTV (275 aa). 2 disordered regions span residues 646–672 and 737–840; these read PPIS…DQSS and DRDS…PPEC. Positions 737–752 are enriched in basic and acidic residues; sequence DRDSEATAEEHSDCSR. Over residues 753 to 773 the composition is skewed to polar residues; that stretch reads ESSASEQDNTLLQQYLTSVQQ. Ser755 is subject to Phosphoserine. Over residues 776-787 the composition is skewed to acidic residues; it reads DAAEAADSDDVA. The segment covering 799-811 has biased composition (basic and acidic residues); sequence ERFDASSDSETHR. Residues 812-833 show a composition bias toward polar residues; that stretch reads VASTSQDEISQTPENCQLNEEA.

Interacts with CALM1, CEP76, KIF24 and TALPID3. Interacts with CCP110. ENKD1 competes with CEP97 for binding to CCP110, destabilizing the interaction between CP110 and CEP97 which promotes the removal of CCP110 and CEP97 from the mother centriole and allows the initiation of ciliogenesis. Via its interaction with CCP110, may indirectly interact with HERC2 and NEURL4. Interacts with MPHOSPH9.

The protein localises to the cytoplasm. It localises to the cytoskeleton. Its subcellular location is the microtubule organizing center. The protein resides in the centrosome. It is found in the centriole. Acts as a key negative regulator of ciliogenesis in collaboration with CCP110 by capping the mother centriole thereby preventing cilia formation. Required for recruitment of CCP110 to the centrosome. The protein is Centrosomal protein of 97 kDa (Cep97) of Mus musculus (Mouse).